Consider the following 250-residue polypeptide: L-ascorbate peroxidase, cytosolic (250 aa).

The active-site Proton acceptor is the His42. Residues 113–137 (VPFHPGREDKPEPPPEGRLPDATKG) form a disordered region. A compositionally biased stretch (basic and acidic residues) spans 117–137 (PGREDKPEPPPEGRLPDATKG). His163 contributes to the heme b binding site. Residues Thr164, Thr180, Asn182, Ile185, and Asp187 each coordinate K(+).

Belongs to the peroxidase family. Ascorbate peroxidase subfamily. It depends on heme b as a cofactor.

It localises to the cytoplasm. The catalysed reaction is L-ascorbate + H2O2 = L-dehydroascorbate + 2 H2O. In terms of biological role, plays a key role in hydrogen peroxide removal. This chain is L-ascorbate peroxidase, cytosolic (APX1), found in Pisum sativum (Garden pea).